Reading from the N-terminus, the 217-residue chain is Small ribosomal subunit protein uS3c (217 aa).

Positions 43 to 117 constitute a KH type-2 domain; it reads IKNYVQKNRK…KLNIAITRIA (75 aa).

The protein belongs to the universal ribosomal protein uS3 family. As to quaternary structure, part of the 30S ribosomal subunit.

It localises to the plastid. The protein resides in the chloroplast. This chain is Small ribosomal subunit protein uS3c (rps3), found in Ranunculus macranthus (Large buttercup).